Consider the following 310-residue polypeptide: Low affinity immunoglobulin gamma Fc region receptor II-b (310 aa).

The N-terminal stretch at 1-42 is a signal peptide; sequence MGILSFLPVLATESDWADCKSPQPWGHMLLWTAVLFLAPVAG. At 43–217 the chain is on the extracellular side; sequence TPAAPPKAVL…KPVTITVQAP (175 aa). Ig-like C2-type domains are found at residues 48 to 127 and 131 to 213; these read PKAV…VHLT and EWLV…VTIT. 2 cysteine pairs are disulfide-bonded: Cys-71-Cys-113 and Cys-152-Cys-196. N-linked (GlcNAc...) asparagine glycosylation is found at Asn-106, Asn-180, and Asn-187. A helical membrane pass occupies residues 218–240; sequence SSSPMGIIVAVVTGIAVAAIVAA. Residues 241–310 lie on the Cytoplasmic side of the membrane; it reads VVALIYCRKK…LEEPDDQNRI (70 aa). Residues 290 to 295 carry the ITIM motif motif; it reads ITYSLL. At Tyr-292 the chain carries Phosphotyrosine; by SRC-type Tyr-kinases.

As to quaternary structure, interacts with INPP5D/SHIP1. Interacts with FGR. Interacts with LYN. In terms of assembly, (Microbial infection) Isoform IIB1 interacts with measles virus protein N. Protein N is released in the blood following lysis of measles infected cells. This interaction presumably block inflammatory immune response. In terms of processing, phosphorylated by the SRC-type Tyr-kinases LYN and BLK. Is the most broadly distributed Fc-gamma-receptor. Expressed in monocyte, neutrophils, macrophages, basophils, eosinophils, Langerhans cells, B-cells, platelets cells and placenta (endothelial cells). Not detected in natural killer cells.

Its subcellular location is the cell membrane. Receptor for the Fc region of complexed or aggregated immunoglobulins gamma. Low affinity receptor. Involved in a variety of effector and regulatory functions such as phagocytosis of immune complexes and modulation of antibody production by B-cells. Binding to this receptor results in down-modulation of previous state of cell activation triggered via antigen receptors on B-cells (BCR), T-cells (TCR) or via another Fc receptor. Isoform IIB1 fails to mediate endocytosis or phagocytosis. Isoform IIB2 does not trigger phagocytosis. In Homo sapiens (Human), this protein is Low affinity immunoglobulin gamma Fc region receptor II-b (FCGR2B).